An 805-amino-acid polypeptide reads, in one-letter code: Phenylalanine--tRNA ligase beta subunit (805 aa).

The 117-residue stretch at 39–155 (VKVLGAFRIC…EDAPMGMRFI (117 aa)) folds into the tRNA-binding domain. One can recognise a B5 domain in the interval 408–479 (DTSRAYRFDP…RVASLTKLQG (72 aa)). Positions 457, 463, 466, and 467 each coordinate Mg(2+). In terms of domain architecture, FDX-ACB spans 707–804 (SDLQAVERDF…VAKATGATLR (98 aa)).

The protein belongs to the phenylalanyl-tRNA synthetase beta subunit family. Type 1 subfamily. In terms of assembly, tetramer of two alpha and two beta subunits. Mg(2+) serves as cofactor.

Its subcellular location is the cytoplasm. It carries out the reaction tRNA(Phe) + L-phenylalanine + ATP = L-phenylalanyl-tRNA(Phe) + AMP + diphosphate + H(+). The polypeptide is Phenylalanine--tRNA ligase beta subunit (Cereibacter sphaeroides (strain ATCC 17023 / DSM 158 / JCM 6121 / CCUG 31486 / LMG 2827 / NBRC 12203 / NCIMB 8253 / ATH 2.4.1.) (Rhodobacter sphaeroides)).